Reading from the N-terminus, the 365-residue chain is tRNA/tmRNA (uracil-C(5))-methyltransferase (365 aa).

S-adenosyl-L-methionine is bound by residues Q189, Y217, N222, E238, and D298. The Nucleophile role is filled by C323. E357 functions as the Proton acceptor in the catalytic mechanism.

This sequence belongs to the class I-like SAM-binding methyltransferase superfamily. RNA M5U methyltransferase family. TrmA subfamily.

It carries out the reaction uridine(54) in tRNA + S-adenosyl-L-methionine = 5-methyluridine(54) in tRNA + S-adenosyl-L-homocysteine + H(+). The catalysed reaction is uridine(341) in tmRNA + S-adenosyl-L-methionine = 5-methyluridine(341) in tmRNA + S-adenosyl-L-homocysteine + H(+). Dual-specificity methyltransferase that catalyzes the formation of 5-methyluridine at position 54 (m5U54) in all tRNAs, and that of position 341 (m5U341) in tmRNA (transfer-mRNA). In Shewanella baltica (strain OS185), this protein is tRNA/tmRNA (uracil-C(5))-methyltransferase.